A 129-amino-acid chain; its full sequence is Histone H3-like centromeric protein A (129 aa).

Positions 1–14 are enriched in basic residues; it reads MGPRRKPRTPRRRP. Positions 1 to 30 are disordered; that stretch reads MGPRRKPRTPRRRPSSPVPGPSRRSSRPGK. At Gly2 the chain carries N,N,N-trimethylglycine. Ser16, Ser22, and Ser57 each carry phosphoserine. Residues 30–129 form an H3-like region; sequence KRRKFLWLKE…RIRGIEGGLG (100 aa). Residues 64–105 are CATD; it reads CGKFTRGVDLCWQAQALLALQEAAEAFLVHLFEDAYLLTLHA.

It belongs to the histone H3 family. Component of centromeric nucleosomes, where DNA is wrapped around a histone octamer core. The octamer contains two molecules each of H2A, H2B, CENPA and H4 assembled in one CENPA-H4 heterotetramer and two H2A-H2B heterodimers. CENPA modulates the DNA-binding characteristics of nucleosomes so that protruding DNA ends have higher flexibility than in nucleosomes containing conventional histone H3. Inhibits binding of histone H1 to nucleosomes, since histone H1 binds preferentially to rigid DNA linkers that protrude from nucleosomes. Nucleosomes containing CENPA also contain histone H2A variants such as MACROH2A and H2A.Z/H2AZ1. The CENPA-H4 heterotetramer is more compact and structurally more rigid than corresponding H3-H4 heterotetramers. Can assemble into nucleosomes that contain both CENPA and histone H3.3; these nucleosomes interact with a single CENPC chain. Heterotrimer composed of HJURP, CENPA and histone H4, where HJURP interacts with the dimer formed by CENPA and histone H4 and prevents tetramerization of CENPA and H4. Component of the CENPA-NAC complex, at least composed of CENPA, CENPC, CENPH, CENPM, CENPN, CENPT and CENPU. Interacts (via CATD domain) with HJURP; the interaction is direct and is required for its localization to centromeres. Interacts with CENPC, CENPN and CENPT; interaction is direct. Part of a centromere complex consisting of CENPA, CENPT and CENPW. Identified in centromere complexes containing histones H2A, H2B and H4, and at least CENPA, CENPB, CENPC, CENPT, CENPN, HJURP, SUPT16H, SSRP1 and RSF1. Can self-associate. The CENPA-H4 heterotetramer can bind DNA by itself (in vitro). Interacts with CDK1, PPP1CA and RBBP7. In terms of processing, trimethylated by NTMT1 at the N-terminal glycine after cleavage of Met-1. Methylation is low before incorporation into nucleosomes and increases with cell cycle progression, with the highest levels in mitotic nucleosomes. Phosphorylated by CDK1 at Ser-57 during early mitosis; this abolishes association with chromatin and centromeres, prevents interaction with HJURP and thereby prevents premature assembly of CENPA into centromeres. Dephosphorylated at Ser-57 by PPP1CA during late mitosis. Post-translationally, poly-ADP-ribosylated by PARP1.

Its subcellular location is the nucleus. It localises to the chromosome. It is found in the centromere. Histone H3-like nucleosomal protein that is specifically found in centromeric nucleosomes. Replaces conventional H3 in the nucleosome core of centromeric chromatin that serves as an assembly site for the inner kinetochore. The presence of CENPA subtly modifies the nucleosome structure and the way DNA is wrapped around the nucleosome and gives rise to protruding DNA ends that are less well-ordered and rigid compared to nucleosomes containing histone H3. May serve as an epigenetic mark that propagates centromere identity through replication and cell division. Required for recruitment and assembly of kinetochore proteins, and as a consequence required for progress through mitosis, chromosome segregation and cytokinesis. The polypeptide is Histone H3-like centromeric protein A (CENPA) (Cricetulus griseus (Chinese hamster)).